We begin with the raw amino-acid sequence, 61 residues long: Photosystem II reaction center protein K (61 aa).

Positions 1-24 (MLNIFSLICICINSALHSSSFFFA) are excised as a propeptide. A helical membrane pass occupies residues 40 to 60 (MPVIPVLFFLLALVWQAAVSF).

The protein belongs to the PsbK family. PSII is composed of 1 copy each of membrane proteins PsbA, PsbB, PsbC, PsbD, PsbE, PsbF, PsbH, PsbI, PsbJ, PsbK, PsbL, PsbM, PsbT, PsbX, PsbY, PsbZ, Psb30/Ycf12, at least 3 peripheral proteins of the oxygen-evolving complex and a large number of cofactors. It forms dimeric complexes.

Its subcellular location is the plastid. The protein resides in the chloroplast thylakoid membrane. Functionally, one of the components of the core complex of photosystem II (PSII). PSII is a light-driven water:plastoquinone oxidoreductase that uses light energy to abstract electrons from H(2)O, generating O(2) and a proton gradient subsequently used for ATP formation. It consists of a core antenna complex that captures photons, and an electron transfer chain that converts photonic excitation into a charge separation. The protein is Photosystem II reaction center protein K of Liriodendron tulipifera (Tuliptree).